Reading from the N-terminus, the 150-residue chain is Small ribosomal subunit protein uS11z (150 aa).

Ser19 is modified (phosphoserine).

It belongs to the universal ribosomal protein uS11 family. Interacts with AAK6.

It is found in the cytoplasm. This is Small ribosomal subunit protein uS11z (RPS14A) from Arabidopsis thaliana (Mouse-ear cress).